Consider the following 199-residue polypeptide: Recombination protein RecR (199 aa).

A C4-type zinc finger spans residues 58 to 73 (CKKCFNFTSEDECEIC). Residues 81–175 (KLICVVAETK…KVTRIAYGLP (95 aa)) enclose the Toprim domain.

Belongs to the RecR family.

In terms of biological role, may play a role in DNA repair. It seems to be involved in an RecBC-independent recombinational process of DNA repair. It may act with RecF and RecO. The protein is Recombination protein RecR of Prochlorococcus marinus (strain MIT 9312).